The primary structure comprises 158 residues: Endoribonuclease YbeY (158 aa).

Residues His-119, His-123, and His-129 each contribute to the Zn(2+) site.

This sequence belongs to the endoribonuclease YbeY family. Zn(2+) serves as cofactor.

It is found in the cytoplasm. Its function is as follows. Single strand-specific metallo-endoribonuclease involved in late-stage 70S ribosome quality control and in maturation of the 3' terminus of the 16S rRNA. The polypeptide is Endoribonuclease YbeY (Acinetobacter baumannii (strain AB307-0294)).